Here is a 502-residue protein sequence, read N- to C-terminus: Cytochrome P450 2J2 (502 aa).

Cys448 is a heme binding site.

Belongs to the cytochrome P450 family. The cofactor is heme. Highly expressed in heart, present at lower levels in liver, kidney and skeletal muscle (at protein level).

It localises to the endoplasmic reticulum membrane. The protein localises to the microsome membrane. The catalysed reaction is (5Z,8Z,11Z,14Z)-eicosatetraenoate + reduced [NADPH--hemoprotein reductase] + O2 = 5,6-epoxy-(8Z,11Z,14Z)-eicosatrienoate + oxidized [NADPH--hemoprotein reductase] + H2O + H(+). It carries out the reaction (5Z,8Z,11Z,14Z)-eicosatetraenoate + reduced [NADPH--hemoprotein reductase] + O2 = (8R,9S)-epoxy-(5Z,11Z,14Z)-eicosatrienoate + oxidized [NADPH--hemoprotein reductase] + H2O + H(+). The enzyme catalyses (5Z,8Z,11Z,14Z)-eicosatetraenoate + reduced [NADPH--hemoprotein reductase] + O2 = (8S,9R)-epoxy-(5Z,11Z,14Z)-eicosatrienoate + oxidized [NADPH--hemoprotein reductase] + H2O + H(+). It catalyses the reaction (5Z,8Z,11Z,14Z)-eicosatetraenoate + reduced [NADPH--hemoprotein reductase] + O2 = (11R,12S)-epoxy-(5Z,8Z,14Z)-eicosatrienoate + oxidized [NADPH--hemoprotein reductase] + H2O + H(+). The catalysed reaction is (5Z,8Z,11Z,14Z)-eicosatetraenoate + reduced [NADPH--hemoprotein reductase] + O2 = (11S,12R)-epoxy-(5Z,8Z,14Z)-eicosatrienoate + oxidized [NADPH--hemoprotein reductase] + H2O + H(+). It carries out the reaction (5Z,8Z,11Z,14Z)-eicosatetraenoate + reduced [NADPH--hemoprotein reductase] + O2 = (14R,15S)-epoxy-(5Z,8Z,11Z)-eicosatrienoate + oxidized [NADPH--hemoprotein reductase] + H2O + H(+). The enzyme catalyses (5Z,8Z,11Z,14Z)-eicosatetraenoate + reduced [NADPH--hemoprotein reductase] + O2 = (14S,15R)-epoxy-(5Z,8Z,11Z)-eicosatrienoate + oxidized [NADPH--hemoprotein reductase] + H2O + H(+). It catalyses the reaction (15S)-hydroperoxy-(5Z,8Z,11Z,13E)-eicosatetraenoate = (13S)-hydroxy-(14S,15S)-epoxy-(5Z,8Z,11Z)-eicosatrienoate. The catalysed reaction is (15S)-hydroperoxy-(5Z,8Z,11Z,13E)-eicosatetraenoate = (13R)-hydroxy-(14S,15S)-epoxy-(5Z,8Z,11Z)-eicosatrienoate. It carries out the reaction (5Z,8Z,11Z,14Z,17Z)-eicosapentaenoate + reduced [NADPH--hemoprotein reductase] + O2 = (17R,18S)-epoxy-(5Z,8Z,11Z,14Z)-eicosatetraenoate + oxidized [NADPH--hemoprotein reductase] + H2O + H(+). The enzyme catalyses (5Z,8Z,11Z,14Z,17Z)-eicosapentaenoate + reduced [NADPH--hemoprotein reductase] + O2 = (17S,18R)-epoxy-(5Z,8Z,11Z,14Z)-eicosatetraenoate + oxidized [NADPH--hemoprotein reductase] + H2O + H(+). It catalyses the reaction (4Z,7Z,10Z,13Z,16Z,19Z)-docosahexaenoate + reduced [NADPH--hemoprotein reductase] + O2 = (19R,20S)-epoxy-(4Z,7Z,10Z,13Z,16Z)-docosapentaenoate + oxidized [NADPH--hemoprotein reductase] + H2O + H(+). The catalysed reaction is (4Z,7Z,10Z,13Z,16Z,19Z)-docosahexaenoate + reduced [NADPH--hemoprotein reductase] + O2 = (19S,20R)-epoxy-(4Z,7Z,10Z,13Z,16Z)-docosapentaenoate + oxidized [NADPH--hemoprotein reductase] + H2O + H(+). It carries out the reaction albendazole + reduced [NADPH--hemoprotein reductase] + O2 = hydroxyalbendazole + oxidized [NADPH--hemoprotein reductase] + H2O + H(+). The enzyme catalyses albendazole + reduced [NADPH--hemoprotein reductase] + O2 = albendazole S-oxide + oxidized [NADPH--hemoprotein reductase] + H2O + H(+). It catalyses the reaction fenbendazole + reduced [NADPH--hemoprotein reductase] + O2 = fenbendazole S-oxide + oxidized [NADPH--hemoprotein reductase] + H2O + H(+). The protein operates within lipid metabolism; arachidonate metabolism. A cytochrome P450 monooxygenase involved in the metabolism of polyunsaturated fatty acids (PUFA) in the cardiovascular system. Mechanistically, uses molecular oxygen inserting one oxygen atom into a substrate, and reducing the second into a water molecule, with two electrons provided by NADPH via cytochrome P450 reductase (NADPH--hemoprotein reductase). Catalyzes the epoxidation of double bonds of PUFA. Converts arachidonic acid to four regioisomeric epoxyeicosatrienoic acids (EpETrE), likely playing a major role in the epoxidation of endogenous cardiac arachidonic acid pools. In endothelial cells, participates in eicosanoids metabolism by converting hydroperoxide species into hydroxy epoxy metabolites. In combination with 15-lipoxygenase metabolizes arachidonic acid and converts hydroperoxyicosatetraenoates (HpETEs) into hydroxy epoxy eicosatrienoates (HEETs), which are precursors of vasodilatory trihydroxyicosatrienoic acids (THETAs). This hydroperoxide isomerase activity is NADPH- and O2-independent. Catalyzes the monooxygenation of a various xenobiotics, such as danazol, amiodarone, terfenadine, astemizole, thioridazine, tamoxifen, cyclosporin A and nabumetone. Catalyzes hydroxylation of the anthelmintics albendazole and fenbendazole. Catalyzes the sulfoxidation of fenbedazole. This chain is Cytochrome P450 2J2, found in Homo sapiens (Human).